Reading from the N-terminus, the 423-residue chain is Kynureninase (423 aa).

Pyridoxal 5'-phosphate-binding positions include leucine 105, serine 106, 133–136, aspartate 218, histidine 221, and tyrosine 243; that span reads FPSD. Residue lysine 244 is modified to N6-(pyridoxal phosphate)lysine. Tryptophan 273 and asparagine 301 together coordinate pyridoxal 5'-phosphate.

This sequence belongs to the kynureninase family. In terms of assembly, homodimer. The cofactor is pyridoxal 5'-phosphate.

It carries out the reaction L-kynurenine + H2O = anthranilate + L-alanine + H(+). It catalyses the reaction 3-hydroxy-L-kynurenine + H2O = 3-hydroxyanthranilate + L-alanine + H(+). It participates in amino-acid degradation; L-kynurenine degradation; L-alanine and anthranilate from L-kynurenine: step 1/1. It functions in the pathway cofactor biosynthesis; NAD(+) biosynthesis; quinolinate from L-kynurenine: step 2/3. Functionally, catalyzes the cleavage of L-kynurenine (L-Kyn) and L-3-hydroxykynurenine (L-3OHKyn) into anthranilic acid (AA) and 3-hydroxyanthranilic acid (3-OHAA), respectively. This Xanthomonas axonopodis pv. citri (strain 306) protein is Kynureninase.